Consider the following 391-residue polypeptide: ATP phosphoribosyltransferase regulatory subunit (391 aa).

The protein belongs to the class-II aminoacyl-tRNA synthetase family. HisZ subfamily. In terms of assembly, heteromultimer composed of HisG and HisZ subunits.

The protein localises to the cytoplasm. It participates in amino-acid biosynthesis; L-histidine biosynthesis; L-histidine from 5-phospho-alpha-D-ribose 1-diphosphate: step 1/9. In terms of biological role, required for the first step of histidine biosynthesis. May allow the feedback regulation of ATP phosphoribosyltransferase activity by histidine. In Clostridium kluyveri (strain ATCC 8527 / DSM 555 / NBRC 12016 / NCIMB 10680 / K1), this protein is ATP phosphoribosyltransferase regulatory subunit.